The sequence spans 149 residues: 3-dehydroquinate dehydratase (149 aa).

Tyr-22 functions as the Proton acceptor in the catalytic mechanism. The substrate site is built by Asn-73, His-79, and Asp-86. Residue His-99 is the Proton donor of the active site. Substrate-binding positions include 100-101 (LS) and Arg-110.

Belongs to the type-II 3-dehydroquinase family. As to quaternary structure, homododecamer.

The enzyme catalyses 3-dehydroquinate = 3-dehydroshikimate + H2O. The protein operates within metabolic intermediate biosynthesis; chorismate biosynthesis; chorismate from D-erythrose 4-phosphate and phosphoenolpyruvate: step 3/7. Functionally, catalyzes a trans-dehydration via an enolate intermediate. The protein is 3-dehydroquinate dehydratase of Prochlorococcus marinus (strain SARG / CCMP1375 / SS120).